Reading from the N-terminus, the 735-residue chain is Type-3 glutamine synthetase (735 aa).

Residues 89–183 (THYCHWFLPL…IPTAFCSWTG (95 aa)) form the GS beta-grasp domain. The GS catalytic domain occupies 188 to 621 (QKTPLLRSME…SLYDLVSTLV (434 aa)).

This sequence belongs to the glutamine synthetase family. Type 3 subfamily. Homohexamer.

The catalysed reaction is L-glutamate + NH4(+) + ATP = L-glutamine + ADP + phosphate + H(+). The sequence is that of Type-3 glutamine synthetase (glnA3) from Dictyostelium discoideum (Social amoeba).